We begin with the raw amino-acid sequence, 277 residues long: Myelin proteolipid protein (277 aa).

The Cytoplasmic portion of the chain corresponds to 1–10 (MGLLECCARC). 3 S-palmitoyl cysteine lipidation sites follow: Cys-6, Cys-7, and Cys-10. The chain crosses the membrane as a helical span at residues 11–36 (LVGAPFASLVATGLCFFGVALFCGCG). Residues 37-59 (HEALTGTEKLIETYFSKNYQDYE) are Extracellular-facing. A helical membrane pass occupies residues 60-88 (YLINVIHAFQYVIYGTASFFFLYGALLLA). Topologically, residues 89–151 (EGFYTTGAVR…LGKWLGHPDK (63 aa)) are cytoplasmic. Cys-109 carries the S-palmitoyl cysteine lipid modification. Ser-114 carries the post-translational modification Phosphoserine. Thr-116 and Thr-118 each carry phosphothreonine. Cys-141 is lipidated: S-palmitoyl cysteine. Residues 152–178 (FVGITYALTVVWLLVFACSAVPVYIYF) form a helical membrane-spanning segment. Residues 179–238 (NTWTTCQSIAFPSKTSASIGSLCADARMYGVLPWNAFPGKVCGSNLLSICKTAEFQMTFH) are Extracellular-facing. 2 disulfide bridges follow: Cys-184-Cys-228 and Cys-201-Cys-220. Ser-199 carries the O-palmitoyl serine lipid modification. Residues 239–268 (LFIAAFVGAAATLISLLTFMIAATYNFAVL) form a helical membrane-spanning segment. Over 269–277 (KLMGRGTKF) the chain is Cytoplasmic.

The protein belongs to the myelin proteolipid protein family.

The protein localises to the cell membrane. Its subcellular location is the myelin membrane. Its function is as follows. This is the major myelin protein from the central nervous system. It plays an important role in the formation or maintenance of the multilamellar structure of myelin. The chain is Myelin proteolipid protein (PLP1) from Macaca fascicularis (Crab-eating macaque).